The chain runs to 205 residues: Small ribosomal subunit protein uS4 (205 aa).

The segment at 19 to 45 (IWGRSKSPVNRREYGPGQHGQRRKGKL) is disordered. The S4 RNA-binding domain maps to 94–157 (RRLDAVVYRA…KQMALVLEAV (64 aa)).

The protein belongs to the universal ribosomal protein uS4 family. As to quaternary structure, part of the 30S ribosomal subunit. Contacts protein S5. The interaction surface between S4 and S5 is involved in control of translational fidelity.

In terms of biological role, one of the primary rRNA binding proteins, it binds directly to 16S rRNA where it nucleates assembly of the body of the 30S subunit. With S5 and S12 plays an important role in translational accuracy. This chain is Small ribosomal subunit protein uS4, found in Azorhizobium caulinodans (strain ATCC 43989 / DSM 5975 / JCM 20966 / LMG 6465 / NBRC 14845 / NCIMB 13405 / ORS 571).